We begin with the raw amino-acid sequence, 180 residues long: Oligoribonuclease (180 aa).

Positions leucine 7–leucine 170 constitute an Exonuclease domain. The active site involves tyrosine 128.

It belongs to the oligoribonuclease family.

It is found in the cytoplasm. Its function is as follows. 3'-to-5' exoribonuclease specific for small oligoribonucleotides. The polypeptide is Oligoribonuclease (Ruthia magnifica subsp. Calyptogena magnifica).